A 640-amino-acid polypeptide reads, in one-letter code: Rab proteins geranylgeranyltransferase component A (640 aa).

Disordered stretches follow at residues 414 to 439 (DILG…NNNN) and 594 to 640 (HNEN…EMEL). Over residues 419 to 439 (NNNNNNNNNNNNNNNNNNNNN) the composition is skewed to low complexity. Acidic residues predominate over residues 604–624 (IDSDEDEDEDINDMNDNEEED).

The protein belongs to the Rab GDI family.

Its function is as follows. Substrate-binding subunit (component A) of the Rab geranylgeranyltransferase (GGTase) complex. Binds unprenylated Rab proteins and presents the substrate peptide to the catalytic component B. The component A is thought to be regenerated by transferring its prenylated Rab back to the donor membrane. The protein is Rab proteins geranylgeranyltransferase component A (MRS6) of Candida albicans (Yeast).